Here is a 362-residue protein sequence, read N- to C-terminus: MAQIFNFSSGPAMLPAEVLKQAQQELRDWNGLGTSVMEVSHRGKEFIQVAEEAEKDFRDLLHVPSNYKVLFCHGGGRGQFAAVPLNILGDKTTADYVDAGYWAASAIKEAKKYCTPNVFDAKVTVDGLRAVKPMREWQLSDNAAYMHYCPNETIDGIAIDETPDFGKDVVVAADFSSTILSRPIDVSRYGVIYAGAQKNIGPAGLTIVIVREDLLGKANIACPSILDYSILNDNGSMFNTPPTFAWYLSGLVFKWLKANGGVAEMDKINQQKAELLYGVIDNSDFYRNDVAKANRSRMNVPFQLADSALDKLFLEESFAAGLHALKGHRVVGGMRASIYNAMPLEGVKALTDFMVEFERRHG.

L-glutamate-binding residues include serine 9 and arginine 42. Residues 76–77, tryptophan 102, threonine 153, aspartate 174, and glutamine 197 each bind pyridoxal 5'-phosphate; that span reads GR. An N6-(pyridoxal phosphate)lysine modification is found at lysine 198. Position 239–240 (239–240) interacts with pyridoxal 5'-phosphate; the sequence is NT.

The protein belongs to the class-V pyridoxal-phosphate-dependent aminotransferase family. SerC subfamily. Homodimer. The cofactor is pyridoxal 5'-phosphate.

The protein localises to the cytoplasm. The enzyme catalyses O-phospho-L-serine + 2-oxoglutarate = 3-phosphooxypyruvate + L-glutamate. It carries out the reaction 4-(phosphooxy)-L-threonine + 2-oxoglutarate = (R)-3-hydroxy-2-oxo-4-phosphooxybutanoate + L-glutamate. It participates in amino-acid biosynthesis; L-serine biosynthesis; L-serine from 3-phospho-D-glycerate: step 2/3. The protein operates within cofactor biosynthesis; pyridoxine 5'-phosphate biosynthesis; pyridoxine 5'-phosphate from D-erythrose 4-phosphate: step 3/5. In terms of biological role, catalyzes the reversible conversion of 3-phosphohydroxypyruvate to phosphoserine and of 3-hydroxy-2-oxo-4-phosphonooxybutanoate to phosphohydroxythreonine. The chain is Phosphoserine aminotransferase from Shigella dysenteriae serotype 1 (strain Sd197).